A 112-amino-acid chain; its full sequence is Large ribosomal subunit protein uL22 (112 aa).

It belongs to the universal ribosomal protein uL22 family. In terms of assembly, part of the 50S ribosomal subunit.

Its function is as follows. This protein binds specifically to 23S rRNA; its binding is stimulated by other ribosomal proteins, e.g. L4, L17, and L20. It is important during the early stages of 50S assembly. It makes multiple contacts with different domains of the 23S rRNA in the assembled 50S subunit and ribosome. In terms of biological role, the globular domain of the protein is located near the polypeptide exit tunnel on the outside of the subunit, while an extended beta-hairpin is found that lines the wall of the exit tunnel in the center of the 70S ribosome. The protein is Large ribosomal subunit protein uL22 of Legionella pneumophila subsp. pneumophila (strain Philadelphia 1 / ATCC 33152 / DSM 7513).